Consider the following 461-residue polypeptide: Fumarate hydratase class II (461 aa).

Substrate-binding positions include 97 to 99, 127 to 130, 137 to 139, and threonine 185; these read SGT, HPND, and SSN. The active-site Proton donor/acceptor is histidine 186. Serine 316 is an active-site residue. Substrate-binding positions include serine 317 and 322–324; that span reads KVN.

It belongs to the class-II fumarase/aspartase family. Fumarase subfamily. In terms of assembly, homotetramer.

It localises to the cytoplasm. It carries out the reaction (S)-malate = fumarate + H2O. It functions in the pathway carbohydrate metabolism; tricarboxylic acid cycle; (S)-malate from fumarate: step 1/1. Its function is as follows. Involved in the TCA cycle. Catalyzes the stereospecific interconversion of fumarate to L-malate. This chain is Fumarate hydratase class II, found in Staphylococcus haemolyticus (strain JCSC1435).